A 90-amino-acid polypeptide reads, in one-letter code: Bombyxin B-6 (90 aa).

Positions 1-20 (MMKTSVMFMLVVVISLMCSS) are cleaved as a signal peptide. Disulfide bonds link Cys30-Cys76, Cys42-Cys89, and Cys75-Cys80. The propeptide at 49 to 67 (GVAQYAPYFWTRQYLGSRG) is c peptide like.

Belongs to the insulin family. In terms of assembly, heterodimer of a B chain and an A chain linked by two disulfide bonds.

The protein localises to the secreted. Brain peptide responsible for activation of prothoracic glands to produce ecdysone in insects. This Bombyx mori (Silk moth) protein is Bombyxin B-6 (BBXB6).